Here is a 580-residue protein sequence, read N- to C-terminus: Frizzled-10-B (580 aa).

The signal sequence occupies residues 1–20; the sequence is MEPRVVTALLLSLAAALCSG. At 21–224 the chain is on the extracellular side; that stretch reads ISSINPDRSG…DVYWSKNDKK (204 aa). In terms of domain architecture, FZ spans 29–150; the sequence is SGEGRCQAIE…NDPNYLCMEA (122 aa). Disulfide bonds link cysteine 34–cysteine 95, cysteine 42–cysteine 88, cysteine 79–cysteine 117, cysteine 106–cysteine 147, and cysteine 110–cysteine 134. Asparagine 48 is a glycosylation site (N-linked (GlcNAc...) asparagine). N-linked (GlcNAc...) asparagine glycosylation occurs at asparagine 153. The disordered stretch occupies residues 173 to 194; that stretch reads RPNSGHEMYPKDPKGRSSCENS. A compositionally biased stretch (basic and acidic residues) spans 180-189; the sequence is MYPKDPKGRS. Residues 225-245 traverse the membrane as a helical segment; sequence FAFIWIAIWSLLCFFSSAFTV. Topologically, residues 246-261 are cytoplasmic; it reads LTFLVDPLRFKYPERP. Residues 262–282 form a helical membrane-spanning segment; that stretch reads IIFLSMCYCVYSVGYIIRLFA. Topologically, residues 283–309 are extracellular; sequence GADSIACDRDSGQLYVIQEGLESTGCT. A helical transmembrane segment spans residues 310 to 330; that stretch reads IVFLILYYFGMASSLWWVILT. Over 331–350 the chain is Cytoplasmic; the sequence is LTWFLAAGKKWGHEAIEANS. The chain crosses the membrane as a helical span at residues 351-371; that stretch reads SYFHLAAWAIPAVKTIMILVM. The Extracellular portion of the chain corresponds to 372–392; the sequence is RRVAGDELTGVCYVGSMDVNA. The helical transmembrane segment at 393–413 threads the bilayer; it reads LTGFVLIPLACYLIIGTSFIL. Residues 414 to 442 are Cytoplasmic-facing; the sequence is SGFVALFHIRRVMKTGGENTDKLEKLMVR. The chain crosses the membrane as a helical span at residues 443 to 463; that stretch reads IGVFSVLYTVPATCVIACYFY. Over 464-501 the chain is Extracellular; sequence ERLNMDFWKILATQDKCKMDSQTKTLDCTMTSSIPAVE. Residues 502-522 form a helical membrane-spanning segment; the sequence is IFMVKIFMLLVVGITSGMWIW. Topologically, residues 523-580 are cytoplasmic; sequence TSKTVQSWQNVFSKSLKKRNRNKPASVITSAGIYKKPQQPPKIHHGKYESALRSPTCV. The Lys-Thr-X-X-X-Trp motif, mediates interaction with the PDZ domain of Dvl family members signature appears at 525–530; the sequence is KTVQSW. Positions 558-580 are disordered; sequence KPQQPPKIHHGKYESALRSPTCV. The PDZ-binding signature appears at 578–580; sequence TCV.

The protein belongs to the G-protein coupled receptor Fz/Smo family. As to expression, expressed in liver, lung, brain, testis, heart and ovary.

Its subcellular location is the cell membrane. Functionally, receptor for Wnt proteins. Most of frizzled receptors are coupled to the beta-catenin canonical signaling pathway, which leads to the activation of disheveled proteins, inhibition of GSK-3 kinase, nuclear accumulation of beta-catenin and activation of Wnt target genes. A second signaling pathway involving PKC and calcium fluxes has been seen for some family members, but it is not yet clear if it represents a distinct pathway or if it can be integrated in the canonical pathway, as PKC seems to be required for Wnt-mediated inactivation of GSK-3 kinase. Both pathways seem to involve interactions with G-proteins. May be involved in transduction and intercellular transmission of polarity information during tissue morphogenesis and/or in differentiated tissues. Activated by Wnt8. Could have an antagonizing activity in the morphogenesis during development. This is Frizzled-10-B (fzd10-b) from Xenopus laevis (African clawed frog).